Here is a 271-residue protein sequence, read N- to C-terminus: Putative phosphoenolpyruvate synthase regulatory protein (271 aa).

Residue 152-159 coordinates ADP; it reads GASRSGKT.

It belongs to the pyruvate, phosphate/water dikinase regulatory protein family. PSRP subfamily.

It carries out the reaction [pyruvate, water dikinase] + ADP = [pyruvate, water dikinase]-phosphate + AMP + H(+). The enzyme catalyses [pyruvate, water dikinase]-phosphate + phosphate + H(+) = [pyruvate, water dikinase] + diphosphate. Functionally, bifunctional serine/threonine kinase and phosphorylase involved in the regulation of the phosphoenolpyruvate synthase (PEPS) by catalyzing its phosphorylation/dephosphorylation. The chain is Putative phosphoenolpyruvate synthase regulatory protein from Marinobacter nauticus (strain ATCC 700491 / DSM 11845 / VT8) (Marinobacter aquaeolei).